A 426-amino-acid chain; its full sequence is Probable M18 family aminopeptidase 2 (426 aa).

Histidine 79, histidine 156, and histidine 399 together coordinate Zn(2+).

Belongs to the peptidase M18 family. It depends on Zn(2+) as a cofactor.

The chain is Probable M18 family aminopeptidase 2 (apeB) from Mycobacterium leprae (strain TN).